Consider the following 208-residue polypeptide: 3-isopropylmalate dehydratase small subunit 2 (208 aa).

It belongs to the LeuD family. LeuD type 1 subfamily. As to quaternary structure, heterodimer of LeuC and LeuD.

The catalysed reaction is (2R,3S)-3-isopropylmalate = (2S)-2-isopropylmalate. The protein operates within amino-acid biosynthesis; L-leucine biosynthesis; L-leucine from 3-methyl-2-oxobutanoate: step 2/4. Its function is as follows. Catalyzes the isomerization between 2-isopropylmalate and 3-isopropylmalate, via the formation of 2-isopropylmaleate. In Salmonella typhimurium (strain LT2 / SGSC1412 / ATCC 700720), this protein is 3-isopropylmalate dehydratase small subunit 2 (leuD2).